The following is a 396-amino-acid chain: Methylthioribose kinase (396 aa).

ATP contacts are provided by residues Asn44, Lys61, and Glu115 to Leu117. Substrate is bound at residue Asp233. Asp250–Glu252 contacts ATP. Arg340 provides a ligand contact to substrate.

This sequence belongs to the methylthioribose kinase family. Homodimer.

It carries out the reaction 5-(methylsulfanyl)-D-ribose + ATP = 5-(methylsulfanyl)-alpha-D-ribose 1-phosphate + ADP + H(+). It functions in the pathway amino-acid biosynthesis; L-methionine biosynthesis via salvage pathway; S-methyl-5-thio-alpha-D-ribose 1-phosphate from S-methyl-5'-thioadenosine (hydrolase route): step 2/2. Catalyzes the phosphorylation of methylthioribose into methylthioribose-1-phosphate. This chain is Methylthioribose kinase, found in Geobacillus thermodenitrificans (strain NG80-2).